The following is a 132-amino-acid chain: Holo-[acyl-carrier-protein] synthase (132 aa).

Asp8 and Glu62 together coordinate Mg(2+).

This sequence belongs to the P-Pant transferase superfamily. AcpS family. The cofactor is Mg(2+).

It localises to the cytoplasm. It carries out the reaction apo-[ACP] + CoA = holo-[ACP] + adenosine 3',5'-bisphosphate + H(+). In terms of biological role, transfers the 4'-phosphopantetheine moiety from coenzyme A to a Ser of acyl-carrier-protein. The chain is Holo-[acyl-carrier-protein] synthase from Polaromonas sp. (strain JS666 / ATCC BAA-500).